The primary structure comprises 744 residues: NAD(P)H-quinone oxidoreductase subunit 5, chloroplastic (744 aa).

16 consecutive transmembrane segments (helical) span residues 9 to 29 (WIIPFLPLPVPMLIGLGLLFF), 40 to 60 (WAFQSVLLLSIVMIFSINLSI), 89 to 109 (IDPLTSIMSILITTVGIMVLI), 125 to 145 (FAYMSFFSTSMLGLVTSSNLI), 147 to 167 (IYIFWELVGIRSYLLIGFWFT), 185 to 205 (GDFGLLLGILGFYWITGSFEF), 219 to 239 (NEVNFLFVTLCAVLLFAGAIA), 258 to 278 (TPISALIHAATMVAAGIFLVA), 290 to 312 (IMNFISLIGIITVFLGATLALAQ), 327 to 347 (LGYMMLALGMGSYRSALFHLI), 354 to 374 (ALLFLGSGSVIHSMETLVGYC), 396 to 416 (TSFFLGTLSLCGIPPLACFWS), 425 to 445 (WLYSPIFAIIAWSTAGLTAFY), 549 to 569 (LFPILILVLFTLFVGFLGIPF), 608 to 628 (VFSVSISSFGIFIAFFLYKPV), and 724 to 744 (YLFFYFSYLSFFLLIYYFFHF).

The protein belongs to the complex I subunit 5 family. In terms of assembly, NDH is composed of at least 16 different subunits, 5 of which are encoded in the nucleus.

Its subcellular location is the plastid. It localises to the chloroplast thylakoid membrane. It catalyses the reaction a plastoquinone + NADH + (n+1) H(+)(in) = a plastoquinol + NAD(+) + n H(+)(out). It carries out the reaction a plastoquinone + NADPH + (n+1) H(+)(in) = a plastoquinol + NADP(+) + n H(+)(out). Its function is as follows. NDH shuttles electrons from NAD(P)H:plastoquinone, via FMN and iron-sulfur (Fe-S) centers, to quinones in the photosynthetic chain and possibly in a chloroplast respiratory chain. The immediate electron acceptor for the enzyme in this species is believed to be plastoquinone. Couples the redox reaction to proton translocation, and thus conserves the redox energy in a proton gradient. The protein is NAD(P)H-quinone oxidoreductase subunit 5, chloroplastic (ndhF) of Gerbera jamesonii (Transvaal daisy).